Consider the following 343-residue polypeptide: L-threonine 3-dehydrogenase (343 aa).

Cys38 contacts Zn(2+). Active-site charge relay system residues include Thr40 and His43. Zn(2+)-binding residues include His63, Glu64, Cys93, Cys96, Cys99, and Cys107. Residues Ile175, Asp195, Arg200, 262–264 (LGI), and 286–287 (IY) contribute to the NAD(+) site.

It belongs to the zinc-containing alcohol dehydrogenase family. As to quaternary structure, homotetramer. It depends on Zn(2+) as a cofactor.

It localises to the cytoplasm. The enzyme catalyses L-threonine + NAD(+) = (2S)-2-amino-3-oxobutanoate + NADH + H(+). Its pathway is amino-acid degradation; L-threonine degradation via oxydo-reductase pathway; glycine from L-threonine: step 1/2. Functionally, catalyzes the NAD(+)-dependent oxidation of L-threonine to 2-amino-3-ketobutyrate. In Pectobacterium carotovorum subsp. carotovorum (strain PC1), this protein is L-threonine 3-dehydrogenase.